Consider the following 175-residue polypeptide: Catabolic 3-dehydroquinase (175 aa).

Residue Y26 is the Proton acceptor of the active site. N104, H110, and D117 together coordinate substrate. Residue H130 is the Proton donor of the active site. Substrate contacts are provided by residues 131-132 (VS) and R141.

This sequence belongs to the type-II 3-dehydroquinase family. In terms of assembly, homododecamer. Adopts a ring-like structure, composed of an arrangement of two hexameric rings stacked on top of one another.

It carries out the reaction 3-dehydroquinate = 3-dehydroshikimate + H2O. It functions in the pathway aromatic compound metabolism; 3,4-dihydroxybenzoate biosynthesis; 3,4-dihydroxybenzoate from 3-dehydroquinate: step 1/2. Its function is as follows. Is involved in the catabolism of quinate. Allows the utilization of quinate as carbon source via the beta-ketoadipate pathway. This chain is Catabolic 3-dehydroquinase, found in Sordaria macrospora (strain ATCC MYA-333 / DSM 997 / K(L3346) / K-hell).